Consider the following 874-residue polypeptide: Alanine--tRNA ligase (874 aa).

4 residues coordinate Zn(2+): His562, His566, Cys664, and His668.

It belongs to the class-II aminoacyl-tRNA synthetase family. It depends on Zn(2+) as a cofactor.

It is found in the cytoplasm. It carries out the reaction tRNA(Ala) + L-alanine + ATP = L-alanyl-tRNA(Ala) + AMP + diphosphate. Its function is as follows. Catalyzes the attachment of alanine to tRNA(Ala) in a two-step reaction: alanine is first activated by ATP to form Ala-AMP and then transferred to the acceptor end of tRNA(Ala). Also edits incorrectly charged Ser-tRNA(Ala) and Gly-tRNA(Ala) via its editing domain. The protein is Alanine--tRNA ligase of Neisseria gonorrhoeae (strain ATCC 700825 / FA 1090).